A 555-amino-acid polypeptide reads, in one-letter code: Hydroxylamine reductase (555 aa).

The [4Fe-4S] cluster site is built by C3, C6, C18, and C25. Positions 252, 276, 320, 407, 435, 460, 494, and 496 each coordinate hybrid [4Fe-2O-2S] cluster. C407 carries the post-translational modification Cysteine persulfide.

It belongs to the HCP family. [4Fe-4S] cluster is required as a cofactor. It depends on hybrid [4Fe-2O-2S] cluster as a cofactor.

The protein resides in the cytoplasm. The catalysed reaction is A + NH4(+) + H2O = hydroxylamine + AH2 + H(+). Functionally, catalyzes the reduction of hydroxylamine to form NH(3) and H(2)O. This Burkholderia lata (strain ATCC 17760 / DSM 23089 / LMG 22485 / NCIMB 9086 / R18194 / 383) protein is Hydroxylamine reductase.